The chain runs to 246 residues: Probable transcriptional regulatory protein CLB_3102 (246 aa).

The protein belongs to the TACO1 family.

The protein resides in the cytoplasm. This chain is Probable transcriptional regulatory protein CLB_3102, found in Clostridium botulinum (strain ATCC 19397 / Type A).